Here is a 250-residue protein sequence, read N- to C-terminus: NADH-quinone oxidoreductase subunit B 2 (250 aa).

Cysteine 41, cysteine 42, cysteine 107, and cysteine 137 together coordinate [4Fe-4S] cluster.

Belongs to the complex I 20 kDa subunit family. As to quaternary structure, NDH-1 is composed of 14 different subunits. Subunits NuoB, C, D, E, F, and G constitute the peripheral sector of the complex. [4Fe-4S] cluster serves as cofactor.

The protein localises to the cell membrane. It carries out the reaction a quinone + NADH + 5 H(+)(in) = a quinol + NAD(+) + 4 H(+)(out). Functionally, NDH-1 shuttles electrons from NADH, via FMN and iron-sulfur (Fe-S) centers, to quinones in the respiratory chain. The immediate electron acceptor for the enzyme in this species is believed to be ubiquinone. Couples the redox reaction to proton translocation (for every two electrons transferred, four hydrogen ions are translocated across the cytoplasmic membrane), and thus conserves the redox energy in a proton gradient. This Herpetosiphon aurantiacus (strain ATCC 23779 / DSM 785 / 114-95) protein is NADH-quinone oxidoreductase subunit B 2.